An 86-amino-acid polypeptide reads, in one-letter code: Small ribosomal subunit protein uS17 (86 aa).

It belongs to the universal ribosomal protein uS17 family. Part of the 30S ribosomal subunit.

Its function is as follows. One of the primary rRNA binding proteins, it binds specifically to the 5'-end of 16S ribosomal RNA. The chain is Small ribosomal subunit protein uS17 from Halalkalibacterium halodurans (strain ATCC BAA-125 / DSM 18197 / FERM 7344 / JCM 9153 / C-125) (Bacillus halodurans).